Here is a 347-residue protein sequence, read N- to C-terminus: Very-long-chain 3-oxoacyl-CoA reductase (347 aa).

Residues 20–40 traverse the membrane as a helical segment; the sequence is LLWVVFGLGVLKCTTLSLRFL. NADP(+) contacts are provided by D120, N147, Y223, K227, V256, and S258. Y223 functions as the Proton donor in the catalytic mechanism. The active-site Lowers pKa of active site Tyr is K227.

It belongs to the short-chain dehydrogenases/reductases (SDR) family. In terms of assembly, interacts with the fatty acid elongation system components ELO3 and TSC13.

It localises to the endoplasmic reticulum membrane. The catalysed reaction is a very-long-chain (3R)-3-hydroxyacyl-CoA + NADP(+) = a very-long-chain 3-oxoacyl-CoA + NADPH + H(+). It catalyses the reaction 3-oxooctadecanoyl-CoA + NADPH + H(+) = (3R)-hydroxyoctadecanoyl-CoA + NADP(+). It carries out the reaction 3-oxoeicosanoyl-CoA + NADPH + H(+) = (3R)-hydroxyeicosanoyl-CoA + NADP(+). The enzyme catalyses 3-oxodocosanoyl-CoA + NADPH + H(+) = (3R)-hydroxydocosanoyl-CoA + NADP(+). The catalysed reaction is 3-oxotetracosanoyl-CoA + NADPH + H(+) = (3R)-hydroxytetracosanoyl-CoA + NADP(+). It catalyses the reaction 3-oxohexacosanoyl-CoA + NADPH + H(+) = (3R)-hydroxyhexacosanoyl-CoA + NADP(+). The protein operates within lipid metabolism; fatty acid biosynthesis. In terms of biological role, component of the microsomal membrane bound fatty acid elongation system, which produces the 26-carbon very long-chain fatty acids (VLCFA) from palmitate. Catalyzes the reduction of the 3-ketoacyl-CoA intermediate that is formed in each cycle of fatty acid elongation. VLCFAs serve as precursors for ceramide and sphingolipids. The polypeptide is Very-long-chain 3-oxoacyl-CoA reductase (IFA38) (Saccharomyces cerevisiae (strain ATCC 204508 / S288c) (Baker's yeast)).